A 179-amino-acid polypeptide reads, in one-letter code: Large ribosomal subunit protein uL5 (179 aa).

This sequence belongs to the universal ribosomal protein uL5 family. Part of the 50S ribosomal subunit; part of the 5S rRNA/L5/L18/L25 subcomplex. Contacts the 5S rRNA and the P site tRNA. Forms a bridge to the 30S subunit in the 70S ribosome.

This is one of the proteins that bind and probably mediate the attachment of the 5S RNA into the large ribosomal subunit, where it forms part of the central protuberance. In the 70S ribosome it contacts protein S13 of the 30S subunit (bridge B1b), connecting the 2 subunits; this bridge is implicated in subunit movement. Contacts the P site tRNA; the 5S rRNA and some of its associated proteins might help stabilize positioning of ribosome-bound tRNAs. This chain is Large ribosomal subunit protein uL5, found in Bacillus cereus (strain G9842).